Reading from the N-terminus, the 982-residue chain is Serine/threonine-protein kinase ATG1 (982 aa).

One can recognise a Protein kinase domain in the interval 19–324; the sequence is FVIGAEIGKG…FENFFAHPVI (306 aa). ATP-binding positions include 25-33 and K48; that span reads IGKGSFAQV. D162 functions as the Proton acceptor in the catalytic mechanism. Disordered stretches follow at residues 334 to 506, 813 to 834, 898 to 918, and 947 to 982; these read DDIP…REKA, RLPD…SVNG, PKRR…DGHA, and RMIS…SYSS. Basic and acidic residues-rich tracts occupy residues 335–359 and 372–387; these read DIPK…KSDD and HPTD…RRVE. Positions 388 to 398 are enriched in low complexity; that stretch reads PPSSAAESAPS. The segment covering 463–481 has biased composition (polar residues); the sequence is SNASLNRSNRESSSPTSAA.

Belongs to the protein kinase superfamily. Ser/Thr protein kinase family. APG1/unc-51/ULK1 subfamily. Homodimer. Forms a ternary complex with ATG13 and ATG17. Uniformly detected in conidia, mycelia and appressoria (at protein level).

The protein localises to the cytoplasm. The protein resides in the preautophagosomal structure membrane. It carries out the reaction L-seryl-[protein] + ATP = O-phospho-L-seryl-[protein] + ADP + H(+). The catalysed reaction is L-threonyl-[protein] + ATP = O-phospho-L-threonyl-[protein] + ADP + H(+). Serine/threonine protein kinase involved in the cytoplasm to vacuole transport (Cvt) and found to be essential in autophagy, where it is required for the formation of autophagosomes. Involved in the clearance of protein aggregates which cannot be efficiently cleared by the proteasome. Required for selective autophagic degradation of the nucleus (nucleophagy) as well as for mitophagy which contributes to regulate mitochondrial quantity and quality by eliminating the mitochondria to a basal level to fulfill cellular energy requirements and preventing excess ROS production. Also involved in endoplasmic reticulum-specific autophagic process, in selective removal of ER-associated degradation (ERAD) substrates. Plays a key role in ATG9 and ATG23 cycling through the pre-autophagosomal structure and is necessary to promote ATG18 binding to ATG9 through phosphorylation of ATG9. Catalyzes phosphorylation of ATG4, decreasing the interaction between ATG4 and ATG8 and impairing deconjugation of PE-conjugated forms of ATG8. Autophagy is essential to fungal development, production of appressorium turgor, and pathogenicity in rice blast disease. The sequence is that of Serine/threonine-protein kinase ATG1 from Pyricularia oryzae (strain 70-15 / ATCC MYA-4617 / FGSC 8958) (Rice blast fungus).